Consider the following 107-residue polypeptide: V-type proton ATPase subunit G (107 aa).

Belongs to the V-ATPase G subunit family. As to quaternary structure, V-ATPase is a heteromultimeric enzyme composed of a peripheral catalytic V1 complex (components A to H) attached to an integral membrane V0 proton pore complex (components: a, c, c', c'' and d).

Its function is as follows. Catalytic subunit of the peripheral V1 complex of vacuolar ATPase (V-ATPase). V-ATPase is responsible for acidifying a variety of intracellular compartments in eukaryotic cells. The sequence is that of V-type proton ATPase subunit G (atp6v1g) from Dictyostelium discoideum (Social amoeba).